A 292-amino-acid chain; its full sequence is tRNA pseudouridine synthase B (292 aa).

The active-site Nucleophile is the Asp40.

Belongs to the pseudouridine synthase TruB family. Type 1 subfamily.

It carries out the reaction uridine(55) in tRNA = pseudouridine(55) in tRNA. In terms of biological role, responsible for synthesis of pseudouridine from uracil-55 in the psi GC loop of transfer RNAs. This Mycoplasma capricolum subsp. capricolum (strain California kid / ATCC 27343 / NCTC 10154) protein is tRNA pseudouridine synthase B.